The sequence spans 654 residues: Import motor subunit, mitochondrial (654 aa).

A mitochondrion-targeting transit peptide spans 1–23; it reads MLAAKNILNRSSLSSSFRIATRL. A Phosphothreonine modification is found at Thr330. The disordered stretch occupies residues 629 to 654; the sequence is EQLYKNDSNNNNNNNGNNAESGETKQ. Positions 637 to 646 are enriched in low complexity; it reads NNNNNNNGNN.

It belongs to the heat shock protein 70 family. As to quaternary structure, component of the PAM complex, at least composed of SSC1 (mtHsp70), MGE1, TIM44, PAM16/TIM16, PAM17 and PAM18/TIM14. In the complex, SSC1 interacts directly with PAM18 and TIM44. Interacts with NAP1.

The protein localises to the mitochondrion matrix. It carries out the reaction ATP + H2O = ADP + phosphate + H(+). Functionally, essential component of the PAM complex, a complex required for the translocation of transit peptide-containing proteins from the inner membrane into the mitochondrial matrix in an ATP-dependent manner. Constitutes the ATP-driven core of the motor and binds the precursor preprotein. Required for the import of the processed frataxin homolog YFH1 into the mitochondrion. The sequence is that of Import motor subunit, mitochondrial from Saccharomyces cerevisiae (strain ATCC 204508 / S288c) (Baker's yeast).